Consider the following 376-residue polypeptide: Actin (376 aa).

The protein belongs to the actin family.

Its subcellular location is the cytoplasm. It localises to the cytoskeleton. It catalyses the reaction ATP + H2O = ADP + phosphate + H(+). Functionally, actins are highly conserved proteins that are involved in various types of cell motility and are ubiquitously expressed in all eukaryotic cells. The protein is Actin of Trypanosoma cruzi.